A 349-amino-acid chain; its full sequence is sn-glycerol-3-phosphate import ATP-binding protein UgpC (349 aa).

An ABC transporter domain is found at 4–235 (VTLTAVRKVY…PASTFVASFM (232 aa)). 37–44 (GPSGCGKS) contributes to the ATP binding site.

Belongs to the ABC transporter superfamily. sn-glycerol-3-phosphate importer (TC 3.A.1.1.3) family. In terms of assembly, the complex is composed of two ATP-binding proteins (UgpC), two transmembrane proteins (UgpA and UgpE) and a solute-binding protein (UgpB).

It localises to the cell inner membrane. It catalyses the reaction sn-glycerol 3-phosphate(out) + ATP + H2O = sn-glycerol 3-phosphate(in) + ADP + phosphate + H(+). In terms of biological role, part of the ABC transporter complex UgpBAEC involved in sn-glycerol-3-phosphate (G3P) import. Responsible for energy coupling to the transport system. The polypeptide is sn-glycerol-3-phosphate import ATP-binding protein UgpC (Jannaschia sp. (strain CCS1)).